We begin with the raw amino-acid sequence, 88 residues long: Small ribosomal subunit protein bS20 (88 aa).

Residues 1 to 16 are compositionally biased toward basic residues; sequence MANTHSAKKATRKITR. The disordered stretch occupies residues 1 to 20; the sequence is MANTHSAKKATRKITRRTAV.

It belongs to the bacterial ribosomal protein bS20 family.

In terms of biological role, binds directly to 16S ribosomal RNA. The polypeptide is Small ribosomal subunit protein bS20 (Nitrobacter hamburgensis (strain DSM 10229 / NCIMB 13809 / X14)).